Consider the following 297-residue polypeptide: MVKIGSHVSMNGKKMLLGSSEDAVQYGANTFMIYTGAPQNTRRKPIEELNIEAGTEHMKANGIQDIVVHAPYIINIGNSIKPATFELGVNFLKNEIDRTEALGAKQIVLHPGAHVGEGAEKGIPKIIEGLNEVLDPNSNVQIALETMAGKGSEIGRTFEELAQIIEGVTHNDRLSICMDTCHIHDAGYNIVEDFDGVLEQFDKIIGIDRLKVVHVNDSKNERGAHKDRHENIGFGYIGFEALHNIVHHPQLSDLPKILETPFVGTDKKNKKPPYKHEIEMLKEGNFDPHLKEKIMEA.

Zn(2+) is bound by residues His69, His110, Glu145, Asp179, His182, His214, Asp227, His229, and Glu259.

This sequence belongs to the AP endonuclease 2 family. The cofactor is Zn(2+).

The enzyme catalyses Endonucleolytic cleavage to 5'-phosphooligonucleotide end-products.. Functionally, endonuclease IV plays a role in DNA repair. It cleaves phosphodiester bonds at apurinic or apyrimidinic (AP) sites, generating a 3'-hydroxyl group and a 5'-terminal sugar phosphate. This chain is Probable endonuclease 4, found in Oceanobacillus iheyensis (strain DSM 14371 / CIP 107618 / JCM 11309 / KCTC 3954 / HTE831).